We begin with the raw amino-acid sequence, 323 residues long: MFARQSLRVAQPLKQGFRKYSTEAPSKGKSSLAPIYLGVGLIGLGVGLYRYNSASAEAPPAERPKVFTGGDQGWVDLKLAQIENLSPNTKRLRFEFPDKEAVSGLHVASALLTKFKPQGAEKPVIRPYTPVSDEEQPGYLDLVVKVYPNGPMSEHLHSMNVDQRLEFKGPIPKYPWEANKHKHICLIAGGTGITPMYQLARKIFKDPEDQTKVTLVFGNVREEDILLKKELEELENTYPRRFRAFYLLDHPPKEWTGGKGYITKELLKTVLPEPKEENIKIFVCGPPGMYKSISGPKVSPTDQGELTGILAELGYSKDQVFKF.

The chain crosses the membrane as a helical span at residues 32–48 (LAPIYLGVGLIGLGVGL). The FAD-binding FR-type domain occupies 72 to 177 (QGWVDLKLAQ…KGPIPKYPWE (106 aa)). 180 to 215 (KHKHICLIAGGTGITPMYQLARKIFKDPEDQTKVTL) is a binding site for FAD.

Belongs to the flavoprotein pyridine nucleotide cytochrome reductase family. FAD is required as a cofactor.

The protein localises to the mitochondrion outer membrane. The enzyme catalyses 2 Fe(III)-[cytochrome b5] + NADH = 2 Fe(II)-[cytochrome b5] + NAD(+) + H(+). Functionally, may mediate the reduction of outer membrane cytochrome b5. In Aspergillus fumigatus (strain ATCC MYA-4609 / CBS 101355 / FGSC A1100 / Af293) (Neosartorya fumigata), this protein is NADH-cytochrome b5 reductase 2 (mcr1).